The sequence spans 91 residues: Small ribosomal subunit protein uS15 (91 aa).

This sequence belongs to the universal ribosomal protein uS15 family. In terms of assembly, part of the 30S ribosomal subunit. Forms a bridge to the 50S subunit in the 70S ribosome, contacting the 23S rRNA.

Functionally, one of the primary rRNA binding proteins, it binds directly to 16S rRNA where it helps nucleate assembly of the platform of the 30S subunit by binding and bridging several RNA helices of the 16S rRNA. In terms of biological role, forms an intersubunit bridge (bridge B4) with the 23S rRNA of the 50S subunit in the ribosome. This Legionella pneumophila (strain Paris) protein is Small ribosomal subunit protein uS15.